A 195-amino-acid chain; its full sequence is Imidazoleglycerol-phosphate dehydratase (195 aa).

Belongs to the imidazoleglycerol-phosphate dehydratase family.

The protein resides in the cytoplasm. It catalyses the reaction D-erythro-1-(imidazol-4-yl)glycerol 3-phosphate = 3-(imidazol-4-yl)-2-oxopropyl phosphate + H2O. The protein operates within amino-acid biosynthesis; L-histidine biosynthesis; L-histidine from 5-phospho-alpha-D-ribose 1-diphosphate: step 6/9. This is Imidazoleglycerol-phosphate dehydratase from Burkholderia cenocepacia (strain ATCC BAA-245 / DSM 16553 / LMG 16656 / NCTC 13227 / J2315 / CF5610) (Burkholderia cepacia (strain J2315)).